The sequence spans 880 residues: Kinesin heavy chain (880 aa).

One can recognise a Kinesin motor domain in the interval 4 to 327 (SIKVVCRFRP…LRFGMRAKAI (324 aa)). ATP-binding positions include 85–92 (GQTGAGKS) and 235–242 (GSEKVGKT). The tract at residues 388-426 (VSGAKAAAAQTPRPSTPSRLATESRAETPVAERSATPGI) is disordered. Over residues 399-408 (PRPSTPSRLA) the composition is skewed to polar residues. The stretch at 428–849 (IDKDEREEFL…QEKLTTASHR (422 aa)) forms a coiled coil.

The protein belongs to the TRAFAC class myosin-kinesin ATPase superfamily. Kinesin family. Kinesin subfamily.

It is found in the cytoplasm. The protein localises to the cytoskeleton. Its function is as follows. Kinesin is a microtubule-associated force-producing protein that may play a role in organelle transport. Its motor activity is directed toward the microtubule's plus end. The polypeptide is Kinesin heavy chain (klp1) (Botryotinia fuckeliana (Noble rot fungus)).